We begin with the raw amino-acid sequence, 533 residues long: Chromosomal replication initiator protein DnaA (533 aa).

Residues Met-1–Pro-72 are domain I, interacts with DnaA modulators. The tract at residues Pro-72–Ser-196 is domain II. The disordered stretch occupies residues Ala-83–Ala-120. Residues Pro-96 to Pro-110 show a composition bias toward pro residues. Positions Gly-111–Ala-120 are enriched in low complexity. A domain III, AAA+ region region spans residues Lys-197–Ser-413. 4 residues coordinate ATP: Gly-241, Gly-243, Lys-244, and Thr-245. Residues Lys-414–Gly-533 form a domain IV, binds dsDNA region.

The protein belongs to the DnaA family. As to quaternary structure, oligomerizes as a right-handed, spiral filament on DNA at oriC.

It is found in the cytoplasm. Its function is as follows. Plays an essential role in the initiation and regulation of chromosomal replication. ATP-DnaA binds to the origin of replication (oriC) to initiate formation of the DNA replication initiation complex once per cell cycle. Binds the DnaA box (a 9 base pair repeat at the origin) and separates the double-stranded (ds)DNA. Forms a right-handed helical filament on oriC DNA; dsDNA binds to the exterior of the filament while single-stranded (ss)DNA is stabiized in the filament's interior. The ATP-DnaA-oriC complex binds and stabilizes one strand of the AT-rich DNA unwinding element (DUE), permitting loading of DNA polymerase. After initiation quickly degrades to an ADP-DnaA complex that is not apt for DNA replication. Binds acidic phospholipids. The sequence is that of Chromosomal replication initiator protein DnaA from Burkholderia pseudomallei (strain 1710b).